The chain runs to 346 residues: MTYALEVDGVDKSFGGATILRGVAFAVEPGSTTAIVGPSGCGKTTLLRLVAGFEKPDAGTIALAGRVVAGSGWAPAHRRSVGYVAQDGALFPHATVGANVGFGLPRRARTPARIAELLEMVSLDPSYAARRPDQLSGGQQQRVALARALAREPELMLLDEPFSALDAGLRANTRRIVADVLAKAAITTILVTHDQPEALSFADRVAVMSAGRLAQIGTPREIYSTPVDVPTAEFIGDAVVLSARVEGSRARCALGDVTVASNGVHGNARVMLRPEQIEVTTDGAGVSGTVVDVEYLGSEMLLGIRLDTGDGEVPERVTVRRFGATALTPGDRVGIRVLGKAVAYDL.

In terms of domain architecture, ABC transporter spans 5 to 235 (LEVDGVDKSF…PVDVPTAEFI (231 aa)). 37–44 (GPSGCGKT) provides a ligand contact to ATP.

Belongs to the ABC transporter superfamily. Fe(3+) ion importer (TC 3.A.1.10) family. As to quaternary structure, the complex is composed of two ATP-binding proteins (FbpC), two transmembrane proteins (FbpB) and a solute-binding protein (FbpA).

The protein resides in the cell membrane. It catalyses the reaction Fe(3+)(out) + ATP + H2O = Fe(3+)(in) + ADP + phosphate + H(+). Its function is as follows. Part of the ABC transporter complex FbpABC involved in Fe(3+) ions import. Responsible for energy coupling to the transport system. The chain is Fe(3+) ions import ATP-binding protein FbpC 2 from Rhodococcus jostii (strain RHA1).